A 57-amino-acid polypeptide reads, in one-letter code: Large ribosomal subunit protein bL32 (57 aa).

This sequence belongs to the bacterial ribosomal protein bL32 family.

This chain is Large ribosomal subunit protein bL32, found in Bacillus pumilus (strain SAFR-032).